The primary structure comprises 107 residues: SH3 domain-binding glutamic acid-rich-like protein 2 (107 aa).

The SH3-binding signature appears at 61-67 (QGNPLPP).

Belongs to the SH3BGR family.

The protein localises to the nucleus. This Mus musculus (Mouse) protein is SH3 domain-binding glutamic acid-rich-like protein 2 (Sh3bgrl2).